The sequence spans 369 residues: MRSLLRWMGVLLLCGLCAAPAQAERIRDLASFAGVRENQLVGYGLVVGLDGTGDQTTQTPFTGQTLINMLSQLGVSIPEGTNMQLRNVAAVMVTAQLPPFARQGQEMDVTVSSMGNADSLRGGTLLMTPLRGVDGNVYAMAQGNLLIGGVGAQQAGSSVQVNHTAAGRIPGGATVEQEVALQLGRADGTLDLYLNESDFTTAQRVVEAINRDFGSPVAAAMDGRLIRLNAPSDSNSRVNFMARIQNLDVTPNQGPAKVIVNSRTGSVVLNREVTLDRAAVAHGNLSVTIDSNPQVSQPNPLGEGETVVVPDADISIQQEGGALQMVNTSADLMDVVNALNALGASPQDLMSILQALKSAGALNAELEII.

A signal peptide spans Met1–Ala23.

This sequence belongs to the FlgI family. As to quaternary structure, the basal body constitutes a major portion of the flagellar organelle and consists of four rings (L,P,S, and M) mounted on a central rod.

It is found in the periplasm. Its subcellular location is the bacterial flagellum basal body. Assembles around the rod to form the L-ring and probably protects the motor/basal body from shearing forces during rotation. The sequence is that of Flagellar P-ring protein from Chromohalobacter salexigens (strain ATCC BAA-138 / DSM 3043 / CIP 106854 / NCIMB 13768 / 1H11).